Here is a 228-residue protein sequence, read N- to C-terminus: 2-C-methyl-D-erythritol 4-phosphate cytidylyltransferase (228 aa).

The protein belongs to the IspD/TarI cytidylyltransferase family. IspD subfamily.

It carries out the reaction 2-C-methyl-D-erythritol 4-phosphate + CTP + H(+) = 4-CDP-2-C-methyl-D-erythritol + diphosphate. Its pathway is isoprenoid biosynthesis; isopentenyl diphosphate biosynthesis via DXP pathway; isopentenyl diphosphate from 1-deoxy-D-xylulose 5-phosphate: step 2/6. Functionally, catalyzes the formation of 4-diphosphocytidyl-2-C-methyl-D-erythritol from CTP and 2-C-methyl-D-erythritol 4-phosphate (MEP). The sequence is that of 2-C-methyl-D-erythritol 4-phosphate cytidylyltransferase from Actinobacillus pleuropneumoniae serotype 5b (strain L20).